The chain runs to 21 residues: Bombinin-H1/H3 (21 aa).

Residue Ile2 is modified to D-allo-isoleucine; in form H3. The residue at position 20 (Ile20) is an Isoleucine amide.

This sequence belongs to the bombinin family. As to expression, expressed by the skin glands.

The protein resides in the secreted. Has antimicrobial and hemolytic activities. The polypeptide is Bombinin-H1/H3 (Bombina variegata (Yellow-bellied toad)).